Consider the following 440-residue polypeptide: Kinetochore protein NUF2 homolog (440 aa).

2 coiled-coil regions span residues 142-239 (LGLL…LRSQ) and 299-386 (INEQ…RQTN).

Belongs to the NUF2 family. Component of the NDC80 complex, which consists of NDC80, NUF2, SPC24 and SPC25.

Its subcellular location is the chromosome. It localises to the centromere. Acts as a component of the essential kinetochore-associated NDC80 complex, which is required for chromosome segregation and spindle checkpoint activity to ensure proper cell division. The protein is Kinetochore protein NUF2 homolog of Arabidopsis thaliana (Mouse-ear cress).